We begin with the raw amino-acid sequence, 356 residues long: Tyrosine recombinase XerS (356 aa).

A Core-binding (CB) domain is found at 16 to 121; sequence IMPWYVLDYY…ALSSLYKYLT (106 aa). The Tyr recombinase domain occupies 169 to 354; it reads AFLDYVDKEY…VNDEQKNALD (186 aa). Catalysis depends on residues arginine 210, lysine 234, histidine 306, arginine 309, and histidine 332. The active-site O-(3'-phospho-DNA)-tyrosine intermediate is tyrosine 341.

This sequence belongs to the 'phage' integrase family. XerS subfamily.

The protein localises to the cytoplasm. Its activity is regulated as follows. FtsK is required for recombination. Site-specific tyrosine recombinase, which acts by catalyzing the cutting and rejoining of the recombining DNA molecules. Essential to convert dimers of the bacterial chromosome into monomers to permit their segregation at cell division. The protein is Tyrosine recombinase XerS of Streptococcus pyogenes serotype M6 (strain ATCC BAA-946 / MGAS10394).